The sequence spans 487 residues: uncharacterized protein (487 aa).

This is an uncharacterized protein from Bacillus subtilis (strain 168).